Consider the following 577-residue polypeptide: Arginine--tRNA ligase (577 aa).

The 'HIGH' region signature appears at proline 122–histidine 132.

The protein belongs to the class-I aminoacyl-tRNA synthetase family. In terms of assembly, monomer.

It is found in the cytoplasm. It carries out the reaction tRNA(Arg) + L-arginine + ATP = L-arginyl-tRNA(Arg) + AMP + diphosphate. The protein is Arginine--tRNA ligase of Aliivibrio salmonicida (strain LFI1238) (Vibrio salmonicida (strain LFI1238)).